The chain runs to 501 residues: Eukaryotic translation initiation factor 3 subunit E (501 aa).

A PCI domain is found at 245-423 (CDLFFYTPYL…ESIESTSTNV (179 aa)). A phosphoserine mark is found at Ser-477 and Ser-479.

Belongs to the eIF-3 subunit E family. As to quaternary structure, component of the eukaryotic translation initiation factor 3 (eIF-3) complex. The eIF-3 complex appears to include tif32/eif3a, SPAC25G10.08/eif3b, tif33/eif3c, SPBC4C3.07/eif3f, tif35/eif3g and sum1/eif3i. This set of common subunits may also associate exclusively with either moe1/eif3d and int6/eif3e, or with SPAC821.05/eif3h and SPAC1751.03/eif3m. The eIF-3 complex may also include SPAC3A12.13c/eif3j. Also interacts with the proteasome via rpn501/rpn502.

The protein localises to the cytoplasm. In terms of biological role, component of the eukaryotic translation initiation factor 3 (eIF-3) complex, which is involved in protein synthesis of a specialized repertoire of mRNAs and, together with other initiation factors, stimulates binding of mRNA and methionyl-tRNAi to the 40S ribosome. The eIF-3 complex specifically targets and initiates translation of a subset of mRNAs involved in cell proliferation (Potential). Required for maintaining the basal level of atf1 and for transcriptional activation of core environmental stress response genes (CESR genes) in response to histidine starvation. May positively regulate proteasome activity. Required for nuclear localization of the proteasome subunit rpn501/rpn502. This chain is Eukaryotic translation initiation factor 3 subunit E (int6), found in Schizosaccharomyces pombe (strain 972 / ATCC 24843) (Fission yeast).